A 911-amino-acid chain; its full sequence is Band 3 anion transport protein (911 aa).

Position 1 is an N-acetylmethionine (Met-1). Acidic residues predominate over residues Met-1–Ile-26. The segment at Met-1–Glu-40 is disordered. Residues Met-1–Pro-403 lie on the Cytoplasmic side of the membrane. Tyr-8, Tyr-21, and Tyr-46 each carry phosphotyrosine. Residues Glu-13–Met-31 form a (Microbial infection) Interaction with P.falciparum (isolate K1) FBPA region. The interval His-55 to Ser-290 is globular. The tract at residues Ala-176–Ser-185 is interaction with ANK1. Residues Ser-185 and Ser-350 each carry the phosphoserine modification. The segment at Arg-304–Ser-357 is dimerization arm. Tyr-359 is modified (phosphotyrosine). A helical transmembrane segment spans residues Gln-404–Leu-427. Over Gly-428–Met-435 the chain is Extracellular. A helical membrane pass occupies residues Gly-436 to Ala-456. The Cytoplasmic portion of the chain corresponds to Gln-457–Leu-459. The chain crosses the membrane as a discontinuously helical span at residues Leu-460–Phe-476. The Extracellular segment spans residues Ser-477–Glu-485. A helical membrane pass occupies residues Tyr-486–Ala-506. At Phe-507–Arg-518 the chain is on the cytoplasmic side. The chain crosses the membrane as a helical span at residues Tyr-519–Ile-541. Topologically, residues Lys-542–Thr-570 are extracellular. The segment at Met-559–Gln-630 is involved in anion transport. A helical transmembrane segment spans residues Ala-571–Phe-591. Over Lys-592–Arg-602 the chain is Cytoplasmic. Residues Arg-603 to Phe-623 traverse the membrane as a helical segment. Over Ile-624–Met-663 the chain is Extracellular. An N-linked (GlcNAc...) (complex) asparagine glycan is attached at Asn-642. Residues Met-664–Ile-684 form a helical membrane-spanning segment. At Thr-685–Ser-700 the chain is on the cytoplasmic side. A helical transmembrane segment spans residues Gly-701–Phe-719. The chain crosses the membrane as a discontinuously helical span at residues Gly-720–Ala-737. A (Microbial infection) 5ABC region; interaction with P.falciparum (isolate 3D7) MSP9 region spans residues Gly-720–Ile-761. The Cytoplasmic segment spans residues Leu-738 to Arg-760. The next 2 helical transmembrane spans lie at Ile-761 to Ser-781 and Arg-782 to Leu-800. Residues Ser-801–Gly-838 lie on the Cytoplasmic side of the membrane. Residues Ile-839–Leu-869 constitute an intramembrane region (discontinuously helical). Cys-843 carries the S-palmitoyl cysteine lipid modification. Topologically, residues Arg-870–Val-911 are cytoplasmic. Tyr-904 carries the post-translational modification Phosphotyrosine.

It belongs to the anion exchanger (TC 2.A.31) family. As to quaternary structure, a dimer in solution, but in its membrane environment, it exists primarily as a mixture of dimers and tetramers and spans the membrane asymmetrically. Component of the ankyrin-1 complex in the erythrocyte, composed of ANK1, RHCE, RHAG, SLC4A1, EPB42, GYPA, GYPB and AQP1. Interacts with STOM; this interaction positively regulates SLC4A1 activity. Interacts with GYPA; a GYPA monomer is bound at each end of the SLC4A1 dimer forming a heterotetramer. Three SLC4A1 dimers (Band 3-I, Band 3-II and Band 3-III) participates in the ankyrin-1 complex. Interacts (via the cytoplasmic domain) with EPB42; this interaction is mediated by the SLC4A1 Band 3-I dimer. Interacts (via the cytoplasmic domain) directly with ANK1; this interaction is mediated by the SLC4A1 Band 3-II and Band 3-III dimers. In terms of assembly, interacts with TMEM139. (Microbial infection) Interacts (via N-terminus) with P.falciparum (isolate K1) aldolase FBPA; the interaction inhibits FBPA catalytic activity. As to quaternary structure, (Microbial infection) Interacts (via the 5ABC region) with P.falciparum (isolate 3D7) MSP9/ABRA (via N-terminus). In terms of assembly, (Microbial infection) Interacts (via the 5ABC region) with P.falciparum (isolate 3D7) MSP1 p42 subunit. Phosphorylated on Tyr-8 and Tyr-21 most likely by SYK. PP1-resistant phosphorylation that precedes Tyr-359 and Tyr-904 phosphorylation. Post-translationally, phosphorylated on Tyr-359 and Tyr-904 most likely by LYN. PP1-inhibited phosphorylation that follows Tyr-8 and Tyr-21 phosphorylation. In terms of processing, N-glycosylated. In terms of tissue distribution, detected in erythrocytes (at protein level). As to expression, expressed in kidney (at protein level).

It is found in the cell membrane. It localises to the basolateral cell membrane. It catalyses the reaction hydrogencarbonate(in) + chloride(out) = hydrogencarbonate(out) + chloride(in). Its activity is regulated as follows. Phenyl isothiocyanate inhibits anion transport in vitro. Functions both as a transporter that mediates electroneutral anion exchange across the cell membrane and as a structural protein. Component of the ankyrin-1 complex of the erythrocyte membrane; required for normal flexibility and stability of the erythrocyte membrane and for normal erythrocyte shape via the interactions of its cytoplasmic domain with cytoskeletal proteins, glycolytic enzymes, and hemoglobin. Functions as a transporter that mediates the 1:1 exchange of inorganic anions across the erythrocyte membrane. Mediates chloride-bicarbonate exchange in the kidney, and is required for normal acidification of the urine. In terms of biological role, (Microbial infection) Acts as a receptor for P.falciparum (isolate 3D7) MSP9 and thus, facilitates merozoite invasion of erythrocytes. Acts as a receptor for P.falciparum (isolate 3D7) MSP1 and thus, facilitates merozoite invasion of erythrocytes. This is Band 3 anion transport protein from Homo sapiens (Human).